A 360-amino-acid polypeptide reads, in one-letter code: Peptide chain release factor 1 (360 aa).

Q235 carries the post-translational modification N5-methylglutamine.

The protein belongs to the prokaryotic/mitochondrial release factor family. Methylated by PrmC. Methylation increases the termination efficiency of RF1.

Its subcellular location is the cytoplasm. Its function is as follows. Peptide chain release factor 1 directs the termination of translation in response to the peptide chain termination codons UAG and UAA. The polypeptide is Peptide chain release factor 1 (Dechloromonas aromatica (strain RCB)).